A 109-amino-acid polypeptide reads, in one-letter code: ATP-dependent Clp protease adapter protein ClpS (109 aa).

A disordered region spans residues 1-25 (MSERKEGDSGAGVRSAVITQTKPKT).

It belongs to the ClpS family. In terms of assembly, binds to the N-terminal domain of the chaperone ClpA.

In terms of biological role, involved in the modulation of the specificity of the ClpAP-mediated ATP-dependent protein degradation. This is ATP-dependent Clp protease adapter protein ClpS from Phenylobacterium zucineum (strain HLK1).